The chain runs to 528 residues: GMP synthase [glutamine-hydrolyzing] (528 aa).

One can recognise a Glutamine amidotransferase type-1 domain in the interval 13–204 (SILILDFGSQ…VYSISKCKAD (192 aa)). The Nucleophile role is filled by Cys90. Active-site residues include His178 and Glu180. The 199-residue stretch at 205–403 (WNTETFLEET…LGLPDEIIKR (199 aa)) folds into the GMPS ATP-PPase domain. ATP is bound at residue 232–238 (SGGVDSS).

Homodimer.

The enzyme catalyses XMP + L-glutamine + ATP + H2O = GMP + L-glutamate + AMP + diphosphate + 2 H(+). The protein operates within purine metabolism; GMP biosynthesis; GMP from XMP (L-Gln route): step 1/1. In terms of biological role, catalyzes the synthesis of GMP from XMP. The polypeptide is GMP synthase [glutamine-hydrolyzing] (Prochlorococcus marinus (strain MIT 9515)).